Reading from the N-terminus, the 283-residue chain is 32 kDa beta-galactoside-binding lectin (283 aa).

Galectin domains are found at residues 17–148 and 156–283; these read YRSL…VHWG and YESG…IQIQ. 217–223 is an a beta-D-galactoside binding site; the sequence is WGNEERE.

In terms of assembly, (Microbial infection) Interacts (via domain galectin 2) with goat TMEM147. Interacts (via domain galectin 1) with goat TMEM63A.

It localises to the membrane. Its function is as follows. Binds galactose. Exerts immunomodulatory effects on host peripheral blood mononuclear cells to down-regulate host immune response. Hemagglutinates human, dog, rabbit, chicken and mouse erythrocytes but does not hemagglutinate the erythrocytes of goat, its natural host. The polypeptide is 32 kDa beta-galactoside-binding lectin (GAL-1) (Haemonchus contortus (Barber pole worm)).